The following is a 426-amino-acid chain: Glutamyl-tRNA reductase (426 aa).

Residues 49–52, serine 110, 115–117, and glutamine 121 contribute to the substrate site; these read TCNR and EAQ. The Nucleophile role is filled by cysteine 50. 191-196 is a binding site for NADP(+); it reads GAGEMA.

This sequence belongs to the glutamyl-tRNA reductase family. In terms of assembly, homodimer.

The catalysed reaction is (S)-4-amino-5-oxopentanoate + tRNA(Glu) + NADP(+) = L-glutamyl-tRNA(Glu) + NADPH + H(+). It functions in the pathway porphyrin-containing compound metabolism; protoporphyrin-IX biosynthesis; 5-aminolevulinate from L-glutamyl-tRNA(Glu): step 1/2. In terms of biological role, catalyzes the NADPH-dependent reduction of glutamyl-tRNA(Glu) to glutamate 1-semialdehyde (GSA). This chain is Glutamyl-tRNA reductase, found in Rhodopirellula baltica (strain DSM 10527 / NCIMB 13988 / SH1).